A 417-amino-acid polypeptide reads, in one-letter code: UDP-N-acetylglucosamine 1-carboxyvinyltransferase (417 aa).

22-23 (KN) provides a ligand contact to phosphoenolpyruvate. Arg-92 contributes to the UDP-N-acetyl-alpha-D-glucosamine binding site. Cys-116 (proton donor) is an active-site residue. 2-(S-cysteinyl)pyruvic acid O-phosphothioketal is present on Cys-116. The UDP-N-acetyl-alpha-D-glucosamine site is built by Asp-304 and Ile-326.

This sequence belongs to the EPSP synthase family. MurA subfamily.

It is found in the cytoplasm. The catalysed reaction is phosphoenolpyruvate + UDP-N-acetyl-alpha-D-glucosamine = UDP-N-acetyl-3-O-(1-carboxyvinyl)-alpha-D-glucosamine + phosphate. It functions in the pathway cell wall biogenesis; peptidoglycan biosynthesis. Its function is as follows. Cell wall formation. Adds enolpyruvyl to UDP-N-acetylglucosamine. This chain is UDP-N-acetylglucosamine 1-carboxyvinyltransferase, found in Geotalea daltonii (strain DSM 22248 / JCM 15807 / FRC-32) (Geobacter daltonii).